We begin with the raw amino-acid sequence, 629 residues long: Carboxypeptidase Y homolog ARB_06361 (629 aa).

The signal sequence occupies residues 1-18; the sequence is MLITWLLDVLLLAPPVAA. N-linked (GlcNAc...) asparagine glycans are attached at residues Asn-157 and Asn-197. Ser-235 is an active-site residue. Cys-326 and Cys-355 are oxidised to a cystine. Residues Asn-405 and Asn-418 are each glycosylated (N-linked (GlcNAc...) asparagine). Asp-453 is a catalytic residue. Cys-456 lines the substrate pocket. N-linked (GlcNAc...) asparagine glycosylation is found at Asn-463 and Asn-554.

The protein belongs to the peptidase S10 family.

The protein localises to the secreted. The enzyme catalyses Release of a C-terminal amino acid with broad specificity.. In terms of biological role, involved in degradation of small peptides. This Arthroderma benhamiae (strain ATCC MYA-4681 / CBS 112371) (Trichophyton mentagrophytes) protein is Carboxypeptidase Y homolog ARB_06361.